We begin with the raw amino-acid sequence, 153 residues long: MKSVNIFTDGSCLGNPGPGGIGVVLRYNQHQKKVSQGYFQTTNNRMELRAVIEGLSMLKEACNVTLYSDSQYMKNGITKWIFKWKKSNWKTANGKAVKNKDLWLLLDEKIQIHYIEWKWVKGHSGHYENEICDELAKLGANNPTLEDVGYQPA.

An RNase H type-1 domain is found at 1 to 141; it reads MKSVNIFTDG…CDELAKLGAN (141 aa). Mg(2+)-binding residues include D9, E47, D69, and D133.

It belongs to the RNase H family. Monomer. Mg(2+) serves as cofactor.

The protein localises to the cytoplasm. The catalysed reaction is Endonucleolytic cleavage to 5'-phosphomonoester.. Endonuclease that specifically degrades the RNA of RNA-DNA hybrids. In Haemophilus ducreyi (strain 35000HP / ATCC 700724), this protein is Ribonuclease HI.